The sequence spans 850 residues: Mitochondrial escape protein 2 (850 aa).

Residues 1-44 (MLLVRTTSLNVSRMPVPCLARGIGILKGKYRLANLMNAQPSVRH) constitute a mitochondrion transit peptide. Residues 44–66 (HVSSEIQQKDQQAGESNTATDTG) are disordered. At 45–287 (VSSEIQQKDQ…VSNFFTNHTR (243 aa)) the chain is on the mitochondrial matrix side. Positions 47 to 64 (SEIQQKDQQAGESNTATD) are enriched in polar residues. The RRM domain maps to 198–272 (TTIVIKFQGP…TVLHIQYENI (75 aa)). A helical membrane pass occupies residues 288–308 (IAIPVLFALLSIFAVLVFDPI). Residues 309–850 (REFSIEQKIT…CEEEIKNLSK (542 aa)) are Mitochondrial intermembrane-facing. Residues 607–621 (KGENVKEPESEKETA) show a composition bias toward basic and acidic residues. The tract at residues 607–633 (KGENVKEPESEKETAENNDSDSEADTS) is disordered.

The protein belongs to the YME2 family.

It localises to the mitochondrion inner membrane. Functionally, plays a role in maintaining the mitochondrial genome and in controlling the mtDNA escape. Involved in the regulation of mtDNA nucleotide structure and number. May have a dispensable role in early maturation of pre-rRNA. The sequence is that of Mitochondrial escape protein 2 (YME2) from Saccharomyces cerevisiae (strain ATCC 204508 / S288c) (Baker's yeast).